The chain runs to 141 residues: MAKKIQGFLKLQIPAGAANPSPPVGPALGQRGVNIMEFCKAFNEKTKDKAGYRIPVVLTIYTDKSFTFELKQPPMTELIKKISGVKKGSDNPLKNKVGKLSKAQIMEIVDMKIKDLNTDDREVAAKIVAGSARSIGIETEL.

The protein belongs to the universal ribosomal protein uL11 family. In terms of assembly, part of the ribosomal stalk of the 50S ribosomal subunit. Interacts with L10 and the large rRNA to form the base of the stalk. L10 forms an elongated spine to which L12 dimers bind in a sequential fashion forming a multimeric L10(L12)X complex. Post-translationally, one or more lysine residues are methylated.

Its function is as follows. Forms part of the ribosomal stalk which helps the ribosome interact with GTP-bound translation factors. The sequence is that of Large ribosomal subunit protein uL11 from Aliarcobacter butzleri (strain RM4018) (Arcobacter butzleri).